Reading from the N-terminus, the 307-residue chain is N-acetylglucosamine-1-phosphotransferase subunit gamma (307 aa).

A signal peptide spans 1-24 (MAGRLAGFLMLLGLASQGPAPAYA). Residues 69-171 (GKCFSLVEST…TFETPLVCHP (103 aa)) form the MRH domain. Residues C71 and C84 are joined by a disulfide bond. N-linked (GlcNAc...) asparagine glycans are attached at residues N88 and N115. Disulfide bonds link C129–C157 and C142–C169. Positions 176–279 (VYPTLSEALQ…HTQPTETTHS (104 aa)) constitute a DMAP1-binding domain.

Homodimer; disulfide-linked. Hexamer of two alpha (GNPTAB), two beta (GNPTAB) and two gamma (GNPTG) subunits; disulfide-linked. The alpha and/or the beta subunits of the enzyme constitute the catalytic subunits. In terms of processing, cys-245 mediates the formation of the interchain disulfide bond for formation of the homodimer. Cys-142, Cys-157 and Cys-169 are involved in intramolecular disulfide bonds formation. As to expression, widely expressed. Highly expressed in the liver, intestine, brain, thymus, testis and ovary.

Its subcellular location is the secreted. It localises to the golgi apparatus. In terms of biological role, non-catalytic subunit of the N-acetylglucosamine-1-phosphotransferase complex, an enzyme that catalyzes the formation of mannose 6-phosphate (M6P) markers on high mannose type oligosaccharides in the Golgi apparatus. Binds and presents the high mannose glycans of the acceptor to the catalytic alpha and beta subunits (GNPTAB). Enhances the rate of N-acetylglucosamine-1-phosphate transfer to the oligosaccharides of acid hydrolase acceptors. In Mus musculus (Mouse), this protein is N-acetylglucosamine-1-phosphotransferase subunit gamma (Gnptg).